Reading from the N-terminus, the 142-residue chain is Large ribosomal subunit protein bL17 (142 aa).

The protein belongs to the bacterial ribosomal protein bL17 family. In terms of assembly, part of the 50S ribosomal subunit. Contacts protein L32.

The sequence is that of Large ribosomal subunit protein bL17 from Wolbachia pipientis wMel.